We begin with the raw amino-acid sequence, 92 residues long: UPF0250 protein Avin_08440 (92 aa).

This sequence belongs to the UPF0250 family.

In Azotobacter vinelandii (strain DJ / ATCC BAA-1303), this protein is UPF0250 protein Avin_08440.